Reading from the N-terminus, the 437-residue chain is uncharacterized protein (437 aa).

This is an uncharacterized protein from Rhodococcus erythropolis (Arthrobacter picolinophilus).